The chain runs to 443 residues: Histidinol dehydrogenase (443 aa).

Residues Tyr127, Gln185, and Asn208 each contribute to the NAD(+) site. Residues Ser234, Gln256, and His259 each coordinate substrate. Zn(2+)-binding residues include Gln256 and His259. Catalysis depends on proton acceptor residues Glu323 and His324. His324, Asp357, Glu411, and His416 together coordinate substrate. Asp357 is a binding site for Zn(2+). His416 serves as a coordination point for Zn(2+).

The protein belongs to the histidinol dehydrogenase family. It depends on Zn(2+) as a cofactor.

It catalyses the reaction L-histidinol + 2 NAD(+) + H2O = L-histidine + 2 NADH + 3 H(+). Its pathway is amino-acid biosynthesis; L-histidine biosynthesis; L-histidine from 5-phospho-alpha-D-ribose 1-diphosphate: step 9/9. Its function is as follows. Catalyzes the sequential NAD-dependent oxidations of L-histidinol to L-histidinaldehyde and then to L-histidine. This chain is Histidinol dehydrogenase, found in Photobacterium profundum (strain SS9).